Here is a 162-residue protein sequence, read N- to C-terminus: MNKITHYFKSLLLLELLGGLWLTLKYTFKPKYTVLYPMEKFPQSPRFRGLHALRRYPNGEERCIACKLCEAVCPALAITIDSAKREDGTRRTTRYDIDLFKCIFCGFCEESCPVDSIVETHILEYHFEKRGENIINKPQLLAIGDRLETEIAERRAADAAFR.

4Fe-4S ferredoxin-type domains lie at 53–83 (LRRYPNGEERCIACKLCEAVCPALAITIDSA) and 93–122 (TRYDIDLFKCIFCGFCEESCPVDSIVETHI). Residues Cys63, Cys66, Cys69, Cys73, Cys102, Cys105, Cys108, and Cys112 each contribute to the [4Fe-4S] cluster site.

It belongs to the complex I 23 kDa subunit family. In terms of assembly, NDH-1 is composed of 14 different subunits. Subunits NuoA, H, J, K, L, M, N constitute the membrane sector of the complex. [4Fe-4S] cluster is required as a cofactor.

The protein resides in the cell inner membrane. The enzyme catalyses a quinone + NADH + 5 H(+)(in) = a quinol + NAD(+) + 4 H(+)(out). In terms of biological role, NDH-1 shuttles electrons from NADH, via FMN and iron-sulfur (Fe-S) centers, to quinones in the respiratory chain. The immediate electron acceptor for the enzyme in this species is believed to be ubiquinone. Couples the redox reaction to proton translocation (for every two electrons transferred, four hydrogen ions are translocated across the cytoplasmic membrane), and thus conserves the redox energy in a proton gradient. This chain is NADH-quinone oxidoreductase subunit I, found in Xanthomonas oryzae pv. oryzae (strain MAFF 311018).